Here is a 467-residue protein sequence, read N- to C-terminus: Putative laccase-16 (467 aa).

Plastocyanin-like domains are found at residues 7–88 (VLGS…PKHG), 98–225 (KEIP…YTDS), and 318–451 (DFPN…KDGK). H22, H24, H67, and H69 together coordinate Cu cation. Positions 368, 371, 373, 430, 431, 432, 436, and 441 each coordinate Cu cation.

It belongs to the multicopper oxidase family. The cofactor is Cu cation.

It localises to the secreted. It is found in the extracellular space. The protein resides in the apoplast. It catalyses the reaction 4 hydroquinone + O2 = 4 benzosemiquinone + 2 H2O. Functionally, lignin degradation and detoxification of lignin-derived products. This is Putative laccase-16 (LAC16) from Oryza sativa subsp. japonica (Rice).